The chain runs to 150 residues: Protein Smg homolog (150 aa).

It belongs to the Smg family.

This chain is Protein Smg homolog, found in Methylibium petroleiphilum (strain ATCC BAA-1232 / LMG 22953 / PM1).